The chain runs to 426 residues: Actin-like protein 6B (426 aa).

An essential for mediating its function in dendritic development; may contribute to neuronal-specific targeting region spans residues 39–82; that stretch reads TTVGLLAAEEGGGLELEGEKEKKGKIFHIDTNALHVPRDGAEVM.

The protein belongs to the actin family. As to quaternary structure, component of the multiprotein chromatin-remodeling complexes SWI/SNF: SWI/SNF-A (BAF), SWI/SNF-B (PBAF) and related complexes. The canonical complex contains a catalytic subunit (either SMARCA4/BRG1/BAF190A or SMARCA2/BRM/BAF190B) and at least SMARCE1, ACTL6A/BAF53, SMARCC1/BAF155, SMARCC2/BAF170, and SMARCB1/SNF5/BAF47. Other subunits specific to each of the complexes may also be present permitting several possible combinations developmentally and tissue specific. Component of the BAF complex, which includes at least actin (ACTB), ARID1A/BAF250A, ARID1B/BAF250B, SMARCA2/BRM, SMARCA4/BRG1/BAF190A, ACTL6A/BAF53, ACTL6B/BAF53B, SMARCE1/BAF57, SMARCC1/BAF155, SMARCC2/BAF170, SMARCB1/SNF5/INI1, and one or more SMARCD1/BAF60A, SMARCD2/BAF60B, or SMARCD3/BAF60C. Component of neuron-specific chromatin remodeling complex (nBAF complex) composed of at least, ARID1A/BAF250A or ARID1B/BAF250B, SMARCD1/BAF60A or SMARCD2/BAF60B or SMARCD3/BAF60C, SMARCA2/BRM/BAF190B, SMARCA4/BRG1/BAF190A, SMARCB1/BAF47, SMARCC1/BAF155, SMARCE1/BAF57, SMARCC2/BAF170, DPF1/BAF45B, DPF3/BAF45C, ACTL6B/BAF53B and actin (ACTB). Note that the nBAF complex is polymorphic in regard to the ATPase, SMARCA2 and SMARCA4 occupying mutually exclusive positions. May be a component of the SWI/SNF-B (PBAF) chromatin remodeling complex, at least composed of SMARCA4/BRG1, SMARCB1/BAF47/SNF5, ACTL6A/BAF53A or ACTL6B/BAF53B, SMARCE1/BAF57, SMARCD1/BAF60A, SMARCD2/BAF60B, perhaps SMARCD3/BAF60C, SMARCC1/BAF155, SMARCC2/BAF170, PBRM1/BAF180, ARID2/BAF200 and actin.

The protein localises to the nucleus. Involved in transcriptional activation and repression of select genes by chromatin remodeling (alteration of DNA-nucleosome topology). Component of SWI/SNF chromatin remodeling complexes that carry out key enzymatic activities, changing chromatin structure by altering DNA-histone contacts within a nucleosome in an ATP-dependent manner. Belongs to the neuron-specific chromatin remodeling complex (nBAF complex), as such plays a role in remodeling mononucleosomes in an ATP-dependent fashion, and is required for postmitotic neural development and dendritic outgrowth. During neural development a switch from a stem/progenitor to a postmitotic chromatin remodeling mechanism occurs as neurons exit the cell cycle and become committed to their adult state. The transition from proliferating neural stem/progenitor cells to postmitotic neurons requires a switch in subunit composition of the npBAF and nBAF complexes. As neural progenitors exit mitosis and differentiate into neurons, npBAF complexes which contain ACTL6A/BAF53A and PHF10/BAF45A, are exchanged for homologous alternative ACTL6B/BAF53B and DPF1/BAF45B or DPF3/BAF45C subunits in neuron-specific complexes (nBAF). The npBAF complex is essential for the self-renewal/proliferative capacity of the multipotent neural stem cells. The nBAF complex along with CREST plays a role regulating the activity of genes essential for dendrite growth. ACTL6B/BAF53B is not essential for assembly of the nBAF complex but is required for targeting the complex and CREST to the promoter of genes essential for dendritic growth. Essential for neuronal maturation and dendrite development. This Bos taurus (Bovine) protein is Actin-like protein 6B (ACTL6B).